Consider the following 368-residue polypeptide: Aminomethyltransferase (368 aa).

Belongs to the GcvT family. As to quaternary structure, the glycine cleavage system is composed of four proteins: P, T, L and H.

It catalyses the reaction N(6)-[(R)-S(8)-aminomethyldihydrolipoyl]-L-lysyl-[protein] + (6S)-5,6,7,8-tetrahydrofolate = N(6)-[(R)-dihydrolipoyl]-L-lysyl-[protein] + (6R)-5,10-methylene-5,6,7,8-tetrahydrofolate + NH4(+). Its function is as follows. The glycine cleavage system catalyzes the degradation of glycine. The sequence is that of Aminomethyltransferase from Thermoanaerobacter pseudethanolicus (strain ATCC 33223 / 39E) (Clostridium thermohydrosulfuricum).